Consider the following 264-residue polypeptide: Small ribosomal subunit protein eS1 (264 aa).

The segment covering 236–255 has biased composition (basic and acidic residues); the sequence is GEGGSGKRGEAGDKSERPEG. The interval 236–264 is disordered; the sequence is GEGGSGKRGEAGDKSERPEGYEPPVQESV.

Belongs to the eukaryotic ribosomal protein eS1 family. Component of the small ribosomal subunit. Mature ribosomes consist of a small (40S) and a large (60S) subunit. The 40S subunit contains about 33 different proteins and 1 molecule of RNA (18S). The 60S subunit contains about 49 different proteins and 3 molecules of RNA (28S, 5.8S and 5S).

It is found in the cytoplasm. This is Small ribosomal subunit protein eS1 from Spodoptera frugiperda (Fall armyworm).